The primary structure comprises 364 residues: UDP-arabinopyranose mutase 1 (364 aa).

The DXD motif motif lies at 110–112 (DDD). N-linked (Glc...) arginine glycosylation is present at arginine 158.

The protein belongs to the RGP family. As to quaternary structure, heteromers with UAM2 and UAM3. The cofactor is Mn(2+). Mg(2+) is required as a cofactor. In terms of processing, reversibly glycosylated in vitro at Arg-158 by UDP-glucose. Reversibly glycosylated by UDP-xylose and UDP-galactose.

The protein resides in the golgi apparatus. The enzyme catalyses UDP-beta-L-arabinofuranose = UDP-beta-L-arabinopyranose. Its function is as follows. UDP-L-arabinose mutase involved in the biosynthesis of cell wall non-cellulosic polysaccharides. Catalyzes the interconvertion of UDP-L-arabinopyranose (UDP-Arap) and UDP-L-arabinofuranose (UDP-Araf). Preferentially catalyzes the formation of UDP-Arap from UDP-Araf. At thermodynamic equilibrium in vitro the ratio of the pyranose form over the furanose form is 90:10. Is probably active as heteromer in vivo. This Oryza sativa subsp. japonica (Rice) protein is UDP-arabinopyranose mutase 1.